A 240-amino-acid chain; its full sequence is EF-hand domain-containing protein D1 (240 aa).

The segment at 17 to 54 is disordered; it reads EVRAETDQGDPQPAPCDAPAGHPEPEPPARAPTASADS. 2 consecutive EF-hand domains span residues 91 to 126 and 127 to 162; these read RLLKDLEKMFKTYDAGRDGFIDLMELKLMMEKLGAP and QTHLGLKSMIKEVDEDFDGKLSFREFLLIFHKAAAG. Ca(2+) contacts are provided by Asp-104, Asp-108, Glu-115, Asp-140, Asp-142, Asp-144, Lys-146, and Glu-151.

Widely expressed. Highest expression in testis, followed by ovary, kidney, cerebrum, cerebellum, heart, liver, and spleen. In the cerebrum and cerebellum, undetectable at embryonic stages, expression increases after birth up to adult stage. In adult CNS, detected in neurons of the cerebellum, cerebrum and hippocampus formation, including dentate gyrus and Cornu Ammonis, but not in the white matter. In the testis, expressed in spermatocytes, but not in spermatogonia nor in interstitial cells. In ovary, found predominantly in mural granulosa cells and those of the cumulus oophorus. In kidney, expressed in collecting ducts, but not in glomeruli. Not detected in skeletal muscle.

Its subcellular location is the mitochondrion inner membrane. Its function is as follows. Acts as a calcium sensor for mitochondrial flash (mitoflash) activation, an event characterized by stochastic bursts of superoxide production. May play a role in neuronal differentiation. This chain is EF-hand domain-containing protein D1 (Efhd1), found in Mus musculus (Mouse).